The chain runs to 268 residues: Cytochrome b-c1 complex subunit Rieske-5, mitochondrial (268 aa).

The N-terminal 56 residues, 1–56 (MLRIAGRKLSSSAAARSSSAFFTRNPFTFTDDSSSPTRSPSPTSLASQFLDQFRGF), are a transit peptide targeting the mitochondrion. The Mitochondrial matrix segment spans residues 57-105 (SSNSVSPAHQTGLVSDLPATVAAIKNPSSKIVYDDSNHERYPPGDPSKR). A helical membrane pass occupies residues 106-128 (AFAYFVLTGGRFVYASLVRLLIL). Residues 129 to 268 (KFVLSMSASK…FMEENKLLIG (140 aa)) are Mitochondrial intermembrane-facing. In terms of domain architecture, Rieske spans 178–266 (INLANSVDLG…YSFMEENKLL (89 aa)). The [2Fe-2S] cluster site is built by C211, H213, C230, and H233. Residues C216 and C232 are joined by a disulfide bond.

Belongs to the Rieske iron-sulfur protein family. Component of the ubiquinol-cytochrome c oxidoreductase (cytochrome b-c1 complex, complex III, CIII), a multisubunit enzyme composed of 3 respiratory subunits cytochrome b, cytochrome c1 and Rieske protein, 2 core protein subunits, and several low-molecular weight protein subunits. The complex exists as an obligatory dimer and forms supercomplexes (SCs) in the inner mitochondrial membrane with cytochrome c oxidase (complex IV, CIV). Requires [2Fe-2S] cluster as cofactor. High levels are seen in the flowers while a low level expression is seen in the roots, leaves and stems.

It localises to the mitochondrion inner membrane. It carries out the reaction a quinol + 2 Fe(III)-[cytochrome c](out) = a quinone + 2 Fe(II)-[cytochrome c](out) + 2 H(+)(out). Its function is as follows. Component of the ubiquinol-cytochrome c oxidoreductase, a multisubunit transmembrane complex that is part of the mitochondrial electron transport chain which drives oxidative phosphorylation. The respiratory chain contains 3 multisubunit complexes succinate dehydrogenase (complex II, CII), ubiquinol-cytochrome c oxidoreductase (cytochrome b-c1 complex, complex III, CIII) and cytochrome c oxidase (complex IV, CIV), that cooperate to transfer electrons derived from NADH and succinate to molecular oxygen, creating an electrochemical gradient over the inner membrane that drives transmembrane transport and the ATP synthase. The cytochrome b-c1 complex catalyzes electron transfer from ubiquinol to cytochrome c, linking this redox reaction to translocation of protons across the mitochondrial inner membrane, with protons being carried across the membrane as hydrogens on the quinol. In the process called Q cycle, 2 protons are consumed from the matrix, 4 protons are released into the intermembrane space and 2 electrons are passed to cytochrome c. The Rieske protein is a catalytic core subunit containing a [2Fe-2S] iron-sulfur cluster. It cycles between 2 conformational states during catalysis to transfer electrons from the quinol bound in the Q(0) site in cytochrome b to cytochrome c1. The sequence is that of Cytochrome b-c1 complex subunit Rieske-5, mitochondrial from Nicotiana tabacum (Common tobacco).